The primary structure comprises 565 residues: MKFSKFYAISTKENPKDATLPSHIFLVKGAFIEQIGSGLYNFLPLGKRVLDKIKNIIKEEMDKAGALEVNLSFNTPAELWKESGRFNVFGKELLRFKDRKENDFVLGPTHEEAMVALIRNKITSYKQLPLHLYQIGLKFRDEARPRFGLLRCREFLMKDGYSFHASEADLDKEFNLMHETYSKILTRLGLDFRAVEADSGAIGGSGSKEFMVLAKNGEDDILLCEHCDYAANIEAAKRTKKTCTDERPEADFATQFHTPNVKTIEELAEFFKINPYYTIKAIAKKAIYESEEKIIVFFIRGDDELQEVKALNAANALELVDVSEEELEKAGLVPGFIGFVGLNGVDFYIDHELENETNMIIGANKKDYHLVGINVVNLNKERFKDLAAVKEHDLCPKCQHKLKQSKGIEVGHIFKLGKKYSQAMNASYLDENGKAQFFTMGCYGMGVSRLVAVAIEASHDEKGCIWNKTLAPFVLDIIVSNIKDIKAMEFAEQIYTHFKDKEILFDDRNERFGVKINDFELMGFPYALVIGKSLENDEVELIHRNTLEKQVLKTQEVISHLEKIL.

Belongs to the class-II aminoacyl-tRNA synthetase family. ProS type 1 subfamily. Homodimer.

It localises to the cytoplasm. The catalysed reaction is tRNA(Pro) + L-proline + ATP = L-prolyl-tRNA(Pro) + AMP + diphosphate. Functionally, catalyzes the attachment of proline to tRNA(Pro) in a two-step reaction: proline is first activated by ATP to form Pro-AMP and then transferred to the acceptor end of tRNA(Pro). As ProRS can inadvertently accommodate and process non-cognate amino acids such as alanine and cysteine, to avoid such errors it has two additional distinct editing activities against alanine. One activity is designated as 'pretransfer' editing and involves the tRNA(Pro)-independent hydrolysis of activated Ala-AMP. The other activity is designated 'posttransfer' editing and involves deacylation of mischarged Ala-tRNA(Pro). The misacylated Cys-tRNA(Pro) is not edited by ProRS. The protein is Proline--tRNA ligase of Campylobacter lari (strain RM2100 / D67 / ATCC BAA-1060).